The sequence spans 92 residues: uncharacterized protein (92 aa).

Residues 1 to 92 (MNGNKDAIFK…LKNLLKGWIE (92 aa)) form the HTH arsR-type domain. Residues 37 to 61 (IRLITKYDLSITRQAIAKHLSVLED) constitute a DNA-binding region (H-T-H motif).

This is an uncharacterized protein from Bacillus subtilis (strain 168).